The primary structure comprises 310 residues: Proline iminopeptidase (310 aa).

The region spanning L41–E288 is the AB hydrolase-1 domain. Residue S116 is the Nucleophile of the active site. Residue D255 is part of the active site. Catalysis depends on H282, which acts as the Proton donor.

Belongs to the peptidase S33 family. As to quaternary structure, part of the tricorn proteolytic complex.

It carries out the reaction Release of N-terminal proline from a peptide.. Functionally, cleaves H-Pro-AMC as well as a wide spectrum of amino acid substrates and several peptide substrates without a proline at the N-terminus. In conjunction with the three factors F1, F2 and F3, Tricorn degrades oligopeptides in a sequential manner, yielding free amino acids. The sequence is that of Proline iminopeptidase (pip) from Saccharolobus solfataricus (strain ATCC 35092 / DSM 1617 / JCM 11322 / P2) (Sulfolobus solfataricus).